Here is a 325-residue protein sequence, read N- to C-terminus: Necdin (325 aa).

Disordered regions lie at residues 1–69 (MSEQ…IEDV) and 77–96 (AAEE…IPAP). One can recognise an MAGE domain in the interval 102–301 (LVQKAHELMW…QAWPSRYREA (200 aa)).

In terms of assembly, binds to the transactivation domains of E2F1 and p53. Binds also SV40 large T antigen and adenovirus E1A. Interacts with nucleobindin 1 and 2. In terms of tissue distribution, brain specific. Not detected in other tissues. Expressed in postmitotic neurons. In adult brain the highest expression is in hypothalamus. Highly expressed in thalamus and midbrain. Relatively low levels are in cerebral cortex, hippocampus, striatum, olfactory bulb, cerebellum, pons and spinal cord. Also detected in neurally differentiated embryonal carcinoma cells.

It is found in the cytoplasm. The protein resides in the nucleus. The protein localises to the nucleoplasm. It localises to the nucleus matrix. Its function is as follows. Growth suppressor that facilitates the entry of the cell into cell cycle arrest. Functionally similar to the retinoblastoma protein it binds to and represses the activity of cell-cycle-promoting proteins such as SV40 large T antigen, adenovirus E1A, and the transcription factor E2F. Necdin also interacts with p53 and works in an additive manner to inhibit cell growth. Also functions as a transcription factor and directly binds to specific guanosine-rich DNA sequences. The chain is Necdin (Ndn) from Mus musculus (Mouse).